The primary structure comprises 585 residues: Beta-(1--&gt;2)glucan export ATP-binding/permease protein NdvA (585 aa).

The ABC transmembrane type-1 domain occupies 21–301 (VGAIVIANIV…MKAFATQIFE (281 aa)). Transmembrane regions (helical) follow at residues 22 to 42 (GAIV…PILF), 55 to 75 (VAPM…AFVL), 136 to 156 (QHLA…AMDV), 158 to 178 (LSLI…VVMS), 245 to 265 (LNRI…TVLV), and 269 to 289 (ELGV…IGRL). The ABC transporter domain occupies 335 to 569 (VEFRDISFDF…NGRFAALLRA (235 aa)). An ATP-binding site is contributed by 368–375 (GPTGAGKT).

The protein belongs to the ABC transporter superfamily. Beta-(1--&gt;2)glucan exporter (TC 3.A.1.108.1) family. As to quaternary structure, homodimer.

It localises to the cell inner membrane. The catalysed reaction is [(1-&gt;2)-beta-D-glucosyl](n)(in) + ATP + H2O = [(1-&gt;2)-beta-D-glucosyl](n)(out) + ADP + phosphate + H(+). Involved in beta-(1--&gt;2)glucan export which is required for nodulation of legume roots. May be involved in other classes of oligosaccharides export. Transmembrane domains (TMD) form a pore in the inner membrane and the ATP-binding domain (NBD) is responsible for energy generation. This Rhizobium meliloti (strain 1021) (Ensifer meliloti) protein is Beta-(1--&gt;2)glucan export ATP-binding/permease protein NdvA.